A 226-amino-acid polypeptide reads, in one-letter code: 7-cyano-7-deazaguanine synthase (226 aa).

Residue 7–17 (LSGGMDSLVTT) participates in ATP binding. 4 residues coordinate Zn(2+): C187, C195, C198, and C201.

The protein belongs to the QueC family. Zn(2+) is required as a cofactor.

It catalyses the reaction 7-carboxy-7-deazaguanine + NH4(+) + ATP = 7-cyano-7-deazaguanine + ADP + phosphate + H2O + H(+). The protein operates within purine metabolism; 7-cyano-7-deazaguanine biosynthesis. Catalyzes the ATP-dependent conversion of 7-carboxy-7-deazaguanine (CDG) to 7-cyano-7-deazaguanine (preQ(0)). This is 7-cyano-7-deazaguanine synthase from Chlorobium phaeobacteroides (strain DSM 266 / SMG 266 / 2430).